We begin with the raw amino-acid sequence, 227 residues long: MGAVMGTFSSLQTKQRRPSKDIAWWYYQYQRDKIEDELEMTMVCHRPEGLEQLEAQTNFTKRELQVLYRGFKNECPSGVVNEDTFKQIYAQFFPHGDASTYAHYLFNAFDTTQTGSVKFEDFVTALSILLRGTVHEKLRWTFNLYDINKDGYINKEEMMDIVKAIYDMMGKYTYPVLKEDTPRQHVDVFFQKMDKNKDGIVTLDEFLESCQEDDNIMRSLQLFQNVM.

Positions 38–94 constitute an EF-hand 1; degenerate domain; that stretch reads LEMTMVCHRPEGLEQLEAQTNFTKRELQVLYRGFKNECPSGVVNEDTFKQIYAQFFP. 3 EF-hand domains span residues 97–132, 133–168, and 181–216; these read DAST…LLRG, TVHE…IYDM, and TPRQ…DDNI. Ca(2+) contacts are provided by Asp-146, Asn-148, Asp-150, Tyr-152, Glu-157, Asp-194, Asn-196, Asp-198, and Glu-205. The segment at 214–227 is interaction with KCND2; that stretch reads DNIMRSLQLFQNVM.

It belongs to the recoverin family. As to quaternary structure, component of heteromultimeric potassium channels. Identified in potassium channel complexes containing KCND1, KCND2, KCND3, KCNIP1, KCNIP2, KCNIP3, KCNIP4, DPP6 and DPP10. Part of a heterooctamer composed of the tetrameric channel and four KCNIP1 chains. Probably part of a complex consisting of KCNIP1, KCNIP2 isoform 3 and KCND2. Self-associates to form homodimers and homotetramers. Interacts with KCNIP2 isoform 3 in a calcium-dependent manner. Interacts with Naja atra venom CTX3. Interacts with KCND2; this interaction mediates the capture of both the N- and C-terminus of KCND2, thus preventing KCND2 N-type inactivation and modulates the channel gating kinetics. Interacts with KCND3; each KCNIP1 monomer interacts with two adjacent KCND3 subunits, through both the N-terminal inactivation ball of a KCND3 subunit and a C-terminal helix from the adjacent KCND3 subunit, clamping them together; this interaction stabilizes the tetrameric form and modulates the channel gating kinetics namely channel activation and inactivation kinetics and rate of recovery from inactivation. As to expression, isoform 1 and isoform 2 are expressed in brain and kidney. Isoform 1 is also expressed in liver, pancreas, skeletal muscle, small intestine and testis. Isoform 2 is also expressed in lung, pancreas, leukocytes, prostate and thymus.

The protein localises to the cell membrane. The protein resides in the cytoplasm. It localises to the cell projection. It is found in the dendrite. Regulatory subunit of Kv4/D (Shal)-type voltage-gated rapidly inactivating A-type potassium channels. Regulates channel density, inactivation kinetics and rate of recovery from inactivation in a calcium-dependent and isoform-specific manner. In vitro, modulates KCND1/Kv4.1 and KCND2/Kv4.2 currents. Increases the presence of KCND2 at the cell surface. In Homo sapiens (Human), this protein is A-type potassium channel modulatory protein KCNIP1.